The chain runs to 325 residues: Serine/threonine-protein kinase CtkA (325 aa).

Residues 21 to 24, lysine 37, glutamine 72, and 88 to 90 contribute to the ATP site; these read NGNK and KDF. Residues asparagine 160 and aspartate 179 each coordinate Mg(2+). An ATP-binding site is contributed by aspartate 179. Residues 296–325 form a disordered region; it reads QHKQAHSNPYDNADDLDNSNEYTPTPKRRR.

Post-translationally, autophosphorylates on either Thr-3 or Thr-7.

The protein localises to the secreted. Its subcellular location is the host cytoplasm. The protein resides in the host cytosol. It is found in the host nucleus. It catalyses the reaction L-seryl-[protein] + ATP = O-phospho-L-seryl-[protein] + ADP + H(+). The enzyme catalyses L-threonyl-[protein] + ATP = O-phospho-L-threonyl-[protein] + ADP + H(+). In terms of biological role, virulence factor acting as a pro-inflammatory protein that induces the secretion of the pro-inflammatory cytokines TNF-alpha (tumor necrosis factor-alpha) and IL-8 (interleukin-8) from human macrophages, as well as enhanced translocation of the transcription factor NF-kappa-B complex in macrophages. Is a kinase capable of autophosphorylating itself at a threonine residue near the N-terminus. Also leads to enhanced phosphorylation of the NF-kappa-B p65 subunit (RELA) at 'Ser-276' in human epithelial cancer cells; its kinase activity is required for this enhanced phosphorylation that up-regulates NF-kappa-B activity, but it does not directly phosphorylate this protein. Thus, the kinase activity of CtkA may play an important role in the induction of host inflammatory responses during H.pylori infection. This Helicobacter pylori (strain J99 / ATCC 700824) (Campylobacter pylori J99) protein is Serine/threonine-protein kinase CtkA (ctkA).